The primary structure comprises 302 residues: MSSKDKKLSKPTSGRTGGIRTLSDLNRRSEPDSDSDSDGPQEYFTGGEKSGMLVQDPTKEPKHDDVDEIFNQARQLGAVEGPLEHPSSSRSFTGTGRLLSGESVPTALQQPEPVIHNIIFWSNGFTVDDGPLRKLDDPENASFLDSIRKSECPKELEPVDKRAPVHVNLMRRDEKCPEKEKLKVSFQGVGRTLGGASSSTASSQSNLTDVAAVQSPLQSLVVDETLPSTSIQLRLADGTRMVAKFNNHHTVNDIRGFIEFSRPGNPNNYTLQVMGFPPKPLTDPSQTIEQAGLASSVVIQKF.

Disordered stretches follow at residues 1-64 and 79-98; these read MSSK…PKHD and VEGP…TGRL. The SEP domain maps to 113-177; it reads PVIHNIIFWS…NLMRRDEKCP (65 aa). Positions 224–301 constitute a UBX domain; the sequence is ETLPSTSIQL…GLASSVVIQK (78 aa).

Interacts with CDC48A.

The polypeptide is Plant UBX domain-containing protein 3 (Arabidopsis thaliana (Mouse-ear cress)).